The chain runs to 375 residues: Chaperone protein DnaJ (375 aa).

One can recognise a J domain in the interval 5–70 (DYYEVLGVNR…RKRASYDQFG (66 aa)). The CR-type zinc-finger motif lies at 133-211 (GLSRTIKVPT…CHGQGRQQQT (79 aa)). C146, C149, C163, C166, C185, C188, C199, and C202 together coordinate Zn(2+). CXXCXGXG motif repeat units follow at residues 146–153 (CKTCNGSG), 163–170 (CPRCNGSG), 185–192 (CSVCRGRG), and 199–206 (CTDCHGQG).

Belongs to the DnaJ family. In terms of assembly, homodimer. Requires Zn(2+) as cofactor.

The protein resides in the cytoplasm. In terms of biological role, participates actively in the response to hyperosmotic and heat shock by preventing the aggregation of stress-denatured proteins and by disaggregating proteins, also in an autonomous, DnaK-independent fashion. Unfolded proteins bind initially to DnaJ; upon interaction with the DnaJ-bound protein, DnaK hydrolyzes its bound ATP, resulting in the formation of a stable complex. GrpE releases ADP from DnaK; ATP binding to DnaK triggers the release of the substrate protein, thus completing the reaction cycle. Several rounds of ATP-dependent interactions between DnaJ, DnaK and GrpE are required for fully efficient folding. Also involved, together with DnaK and GrpE, in the DNA replication of plasmids through activation of initiation proteins. This chain is Chaperone protein DnaJ, found in Coxiella burnetii (strain CbuK_Q154) (Coxiella burnetii (strain Q154)).